Consider the following 277-residue polypeptide: Large ribosomal subunit protein uL2 (277 aa).

The disordered stretch occupies residues 215–263 (LGRKPHQRGSAMNPVDHPHGGGEGRTGAGRVPVSPWGQPAKGLKTRKKR).

Belongs to the universal ribosomal protein uL2 family. In terms of assembly, part of the 50S ribosomal subunit. Forms a bridge to the 30S subunit in the 70S ribosome.

Functionally, one of the primary rRNA binding proteins. Required for association of the 30S and 50S subunits to form the 70S ribosome, for tRNA binding and peptide bond formation. It has been suggested to have peptidyltransferase activity; this is somewhat controversial. Makes several contacts with the 16S rRNA in the 70S ribosome. This chain is Large ribosomal subunit protein uL2, found in Deinococcus geothermalis (strain DSM 11300 / CIP 105573 / AG-3a).